A 552-amino-acid polypeptide reads, in one-letter code: 3-hydroxy-3-methylglutaryl-coenzyme A reductase 1 (552 aa).

2 stretches are compositionally biased toward low complexity: residues 79–99 and 112–122; these read QHNQ…QQPQ and QQQQQQQQQQQ. Residues 79–138 form a disordered region; sequence QHNQQQQQKQQPSQDYIQQPQNDNNINSGKEQEQQQQQQQQQQQTPDITNQPTKTNKKIP. Over residues 123–132 the composition is skewed to polar residues; sequence TPDITNQPTK. Glu-237 serves as the catalytic Charge relay system. Residue Asn-288 is glycosylated (N-linked (GlcNAc...) asparagine). Lys-369 acts as the Charge relay system in catalysis. N-linked (GlcNAc...) asparagine glycosylation is present at Asn-375. Asp-445 functions as the Charge relay system in the catalytic mechanism. His-543 (proton donor) is an active-site residue.

This sequence belongs to the HMG-CoA reductase family.

Its subcellular location is the endoplasmic reticulum membrane. The catalysed reaction is (R)-mevalonate + 2 NADP(+) + CoA = (3S)-3-hydroxy-3-methylglutaryl-CoA + 2 NADPH + 2 H(+). The protein operates within metabolic intermediate biosynthesis; (R)-mevalonate biosynthesis; (R)-mevalonate from acetyl-CoA: step 3/3. Its function is as follows. This transmembrane glycoprotein is involved in the control of cholesterol biosynthesis. It is the rate-limiting enzyme of the sterol biosynthesis. The chain is 3-hydroxy-3-methylglutaryl-coenzyme A reductase 1 (hmgA) from Dictyostelium discoideum (Social amoeba).